A 321-amino-acid chain; its full sequence is Leucine-rich repeat-containing protein 46 (321 aa).

LRR repeat units lie at residues glutamate 45–glutamine 66, asparagine 67–proline 88, serine 89–proline 110, and cysteine 111–glutamine 132. An LRRCT domain is found at asparagine 142–aspartate 184. 2 positions are modified to phosphoserine: serine 175 and serine 182. Residues leucine 201 to threonine 221 are a coiled coil. A disordered region spans residues aspartate 235–lysine 321.

The protein resides in the cell projection. Its subcellular location is the cilium. The protein localises to the flagellum. Functionally, required for normal spermatogenesis and male fertility. Plays an important role in sperm flagellum biogenesis. The polypeptide is Leucine-rich repeat-containing protein 46 (LRRC46) (Homo sapiens (Human)).